The sequence spans 530 residues: Putative ABC transporter ATP-binding protein SSO1893 (530 aa).

ABC transporter domains are found at residues I6–E243 and I282–L516. ATP-binding positions include G38 to S45 and G314 to T321.

Belongs to the ABC transporter superfamily.

The protein resides in the cell membrane. In terms of biological role, probably part of an ABC transporter complex. Responsible for energy coupling to the transport system. In Saccharolobus solfataricus (strain ATCC 35092 / DSM 1617 / JCM 11322 / P2) (Sulfolobus solfataricus), this protein is Putative ABC transporter ATP-binding protein SSO1893.